The sequence spans 286 residues: 33 kDa chaperonin (286 aa).

2 cysteine pairs are disulfide-bonded: Cys-225-Cys-227 and Cys-258-Cys-261.

Belongs to the HSP33 family. Post-translationally, under oxidizing conditions two disulfide bonds are formed involving the reactive cysteines. Under reducing conditions zinc is bound to the reactive cysteines and the protein is inactive.

The protein localises to the cytoplasm. Functionally, redox regulated molecular chaperone. Protects both thermally unfolding and oxidatively damaged proteins from irreversible aggregation. Plays an important role in the bacterial defense system toward oxidative stress. The sequence is that of 33 kDa chaperonin from Shewanella woodyi (strain ATCC 51908 / MS32).